Consider the following 568-residue polypeptide: MASHVDLLTELQLLEKVPTLERLRAAQKRRAQQLKKWAQYEQDLLHRKRKHERKRSTGGRRKKVSFEASVALLEASLRNDAEEVRYFLKNKVSPDLCNEDGLTALHQCCIDNFEEIVKLLLSHGANVNAKDNELWTPLHAAATCGHINLVKILVQYGADLLAVNSDGNMPYDLCEDEPTLDVIETCMAYQGITQEKINEMRAAPEQKMISDIHCMIAAGQDLDWIDGQGATLLHIAGANGYLRAAELLLDHGVRVDVKDWDGWEPLHAAAFWGQMPMAELLVSHGASLSARTSMDEMPIDLCEEEEFKVLLLELKHKHDVIMKSQLRHKSSLSRRTSSAGSRGKVVRRASLSDRTNLYRKEYEGEAILWQQRSAAEDQRTSTYNGDIRETRTDQENKDPNPRLEKPVLLSEFSTKISRGELDGPVENGLRAPVSTYQYALANGDIWKMHEMPDYSMAYGNPGVADVPPPWSGFKEQSPQTLLELKRQRAAAKLLSHPFLSTHLGSSVARSGESSSEGKAPLIGGRTSPYSSNGTSVYYTVTSGDPPLLKFKAPMEEMEEKVHGCCRIS.

Positions 15-55 (EKVPTLERLRAAQKRRAQQLKKWAQYEQDLLHRKRKHERKR) form a coiled coil. Serine 69 carries the phosphoserine modification. ANK repeat units lie at residues 100–129 (DGLT…NVNA), 133–162 (ELWT…DLLA), 228–257 (QGAT…RVDV), and 261–290 (DGWE…SLSA). Phosphoserine is present on residues serine 333, serine 337, and serine 350. The tract at residues 373-403 (SAAEDQRTSTYNGDIRETRTDQENKDPNPRL) is disordered. Residues 386–403 (DIRETRTDQENKDPNPRL) show a composition bias toward basic and acidic residues. Serine 477 is modified (phosphoserine). Residues 505-517 (SSVARSGESSSEG) show a composition bias toward low complexity. Positions 505 to 527 (SSVARSGESSSEGKAPLIGGRTS) are disordered. The ANK 5 repeat unit spans residues 531–560 (SNGTSVYYTVTSGDPPLLKFKAPMEEMEEK). A lipid anchor (S-palmitoyl cysteine) is attached at cysteine 564. At cysteine 565 the chain carries Cysteine methyl ester. Cysteine 565 carries S-farnesyl cysteine lipidation. The propeptide at 566 to 568 (RIS) is removed in mature form.

As to quaternary structure, interacts with PPP1CA, PPP1CB and MSN. Interacts (via its fourth ankyrin repeat) with the mature dimeric form of RPSA/LAMR1. Interacts with EEF1A1. Interacts with PTEN. Interacts with ECE1. Post-translationally, phosphorylated by PKA and, after PKA priming, by GSK3B. Phosphorylation by GSK3B reduces its association with PP1C and enhances PP1C activity. Dephosphorylation by its associated PP1C results in enhanced association with PP1C, but reduced PP1C activity.

It localises to the cell membrane. It is found in the nucleus. The protein resides in the cell projection. In terms of biological role, regulator of protein phosphatase 1 (PP1) that acts as a positive regulator of pulmonary endothelial cell (EC) barrier function. Protects the endothelial barrier from lipopolysaccharide (LPS)-induced vascular leakage. Involved in the regulation of the PI3K/AKT signaling pathway. Involved in the regulation of angiogenesis and endothelial cell proliferation through the control of ECE1 dephosphorylation, trafficking and activity. Involved in the regulation of endothelial cell filopodia extension. May be a downstream target for TGF-beta1 signaling cascade in endothelial cells. Involved in PKA-mediated moesin dephosphorylation which is important in EC barrier protection against thrombin stimulation. Promotes the interaction of PPP1CA with RPSA/LAMR1 and in turn facilitates the dephosphorylation of RPSA/LAMR1. Involved in the dephosphorylation of EEF1A1. In Mus musculus (Mouse), this protein is Protein phosphatase 1 regulatory inhibitor subunit 16B (Ppp1r16b).